Reading from the N-terminus, the 125-residue chain is Ribosome-binding factor A (125 aa).

This sequence belongs to the RbfA family. In terms of assembly, monomer. Binds 30S ribosomal subunits, but not 50S ribosomal subunits or 70S ribosomes.

It is found in the cytoplasm. Functionally, one of several proteins that assist in the late maturation steps of the functional core of the 30S ribosomal subunit. Associates with free 30S ribosomal subunits (but not with 30S subunits that are part of 70S ribosomes or polysomes). Required for efficient processing of 16S rRNA. May interact with the 5'-terminal helix region of 16S rRNA. The chain is Ribosome-binding factor A from Desulfitobacterium hafniense (strain DSM 10664 / DCB-2).